The following is a 122-amino-acid chain: Large ribosomal subunit protein uL14 (122 aa).

The protein belongs to the universal ribosomal protein uL14 family. In terms of assembly, part of the 50S ribosomal subunit. Forms a cluster with proteins L3 and L19. In the 70S ribosome, L14 and L19 interact and together make contacts with the 16S rRNA in bridges B5 and B8.

Its function is as follows. Binds to 23S rRNA. Forms part of two intersubunit bridges in the 70S ribosome. This is Large ribosomal subunit protein uL14 from Erythrobacter litoralis (strain HTCC2594).